The sequence spans 694 residues: MTRTALVTTALPYANGPLHLGHLVGYIQADIWVRARRLRGDKTWFVCADDTHGTPIMLAAEKAGVTPEAFIANVQASHERDFAAFGVTFDHYDSTNSPVNRELTEAFYAKLEAAGHISRRSVAQFYDTAKGMFLPDRYIKGICPNCGSPDQYGDNCEVCGATYAPTELKEPKSVISGATPELRDSEHFFFEVGHFDGFLREWLAGDVALPGVKAKLKEWLDAEGGLRAWDISRDAPYFGFQIPGQPGKYFYVWLDAPIGYLCSFKTLCAQMGENFEAHLVAGTQTELHHFIGKDIVNFHGLFWPAVLHGTGHRAPTRLHVNGYLTVDGAKMSKSRGTFVMARTFLDVGLEPEALRYYFAAKSSGGVDDLDLNLGDFIARVNADLVGKFVNLASRCAGFIGKRFDGKLADALPDAAQYDRFVAALAPIREAYERNDAASAIRQTMALADEANKYIDDTKPWVIAKQDGADAQLQSVCTQGLNLFRILVAALKPILPRTCAEAEAFLSAPMTSWEDVIGPLTAHTIQPYTALFTRIDPKLIDAMTDASKDTLAAPATPATASKPAPAKADAKPAAAANPQSPIATPGFIGMDDFAKLDLRIGKVLACEFVEGSDKLLRFELDAGELGTRQIFSGIRASYREPETLVGRSVVFIANLAPRKMRFGISEGMILSAGFDGGALALLDADSGAQPGMPVR.

Positions 12–22 (PYANGPLHLGH) match the 'HIGH' region motif. Residues cysteine 143, cysteine 146, cysteine 156, and cysteine 159 each contribute to the Zn(2+) site. The 'KMSKS' region signature appears at 330–334 (KMSKS). Residue lysine 333 coordinates ATP. The tract at residues 550–577 (LAAPATPATASKPAPAKADAKPAAAANP) is disordered. A compositionally biased stretch (low complexity) spans 551–575 (AAPATPATASKPAPAKADAKPAAAA). One can recognise a tRNA-binding domain in the interval 591 to 694 (DFAKLDLRIG…SGAQPGMPVR (104 aa)).

Belongs to the class-I aminoacyl-tRNA synthetase family. MetG type 1 subfamily. As to quaternary structure, homodimer. Requires Zn(2+) as cofactor.

The protein localises to the cytoplasm. The catalysed reaction is tRNA(Met) + L-methionine + ATP = L-methionyl-tRNA(Met) + AMP + diphosphate. Is required not only for elongation of protein synthesis but also for the initiation of all mRNA translation through initiator tRNA(fMet) aminoacylation. The polypeptide is Methionine--tRNA ligase (Xanthomonas axonopodis pv. citri (strain 306)).